Here is a 1744-residue protein sequence, read N- to C-terminus: Myotubularin-related protein 5 (1744 aa).

Positions 14-150 constitute a uDENN domain; sequence DTVAVIVLEE…IRFLTYELVE (137 aa). The region spanning 165–304 is the cDENN domain; the sequence is ELGFELIPIS…YYNSLHQRLR (140 aa). The dDENN domain occupies 306 to 412; the sequence is VMFTTTSQED…LTRALPRRKH (107 aa). The GRAM domain maps to 787-871; sequence KGNFDPVLAH…LYSMESFKKL (85 aa). The 452-residue stretch at 996 to 1447 folds into the Myotubularin phosphatase domain; sequence NAHIRYAVID…PQIHMWPFLA (452 aa). Polar residues predominate over residues 1102 to 1116; sequence TGSMTGSQQTLHSKA. Positions 1102 to 1123 are disordered; it reads TGSMTGSQQTLHSKASSNEESS. The Phorbol-ester/DAG-type zinc finger occupies 1540–1590; sequence IHELTPFTVGARPVQCCYCTNILTRWSKAVHCKKCRIHVHEGCVNRNITIG. Residues 1643–1743 enclose the PH domain; sequence PPLCTGYLSK…WKECIEQVIR (101 aa).

It belongs to the protein-tyrosine phosphatase family. Non-receptor class myotubularin subfamily.

Probably acts as an adapter for other myotubularin-like phosphatases. The sequence is that of Myotubularin-related protein 5 from Caenorhabditis elegans.